An 89-amino-acid polypeptide reads, in one-letter code: Phasin PhaP (89 aa).

Helix regions lie at residues T3–E26 and D39–Q83.

Homotetramer.

The protein localises to the cellular thylakoid membrane. It is found in the cytoplasm. It participates in biopolymer metabolism; poly-(R)-3-hydroxybutanoate biosynthesis. A phasin, it attaches to the polyhydroxybutyrate (PHB) granule surface regulating the number and size of PHB granules within a cell. It probably also acts as a regulator affecting the biosynthetic activity of PHB synthase in vivo. The chain is Phasin PhaP from Synechocystis sp. (strain ATCC 27184 / PCC 6803 / Kazusa).